We begin with the raw amino-acid sequence, 556 residues long: Glutamine--tRNA ligase (556 aa).

Positions 34–44 (PEPNGFLHIGH) match the 'HIGH' region motif. Residues 35–37 (EPN) and 41–47 (HIGHAKA) contribute to the ATP site. L-glutamine-binding residues include D67 and Y212. ATP contacts are provided by residues T231, 261 to 262 (RL), and 269 to 271 (MSK). A 'KMSKS' region motif is present at residues 268 to 272 (LMSKR).

It belongs to the class-I aminoacyl-tRNA synthetase family. In terms of assembly, monomer.

The protein localises to the cytoplasm. It catalyses the reaction tRNA(Gln) + L-glutamine + ATP = L-glutaminyl-tRNA(Gln) + AMP + diphosphate. This Colwellia psychrerythraea (strain 34H / ATCC BAA-681) (Vibrio psychroerythus) protein is Glutamine--tRNA ligase.